We begin with the raw amino-acid sequence, 517 residues long: Ladinin-1 (517 aa).

Residues 1–401 (MAVSRKDWSA…SASMKLPDNT (401 aa)) form a disordered region. Ser-38 is subject to Phosphoserine. Residues 48-58 (LSQNGDRQASA) are compositionally biased toward polar residues. Residues Ser-64, Ser-78, Ser-121, and Ser-123 each carry the phosphoserine modification. Positions 120 to 131 (NSLSPVQATQKP) are enriched in polar residues. Composition is skewed to basic and acidic residues over residues 134-151 (SKKELEIPPRRRLSREQR) and 161-174 (LVGREPEERKKGVP). SEK repeat units follow at residues 203–205 (SEK), 209–211 (SEK), 215–217 (SEK), 221–223 (SEK), 227–229 (SEK), 239–241 (SEK), 257–259 (SEK), and 269–271 (SEK). An 8 X SEK repeats region spans residues 203–271 (SEKVLASEKT…IFEKALASEK (69 aa)). Positions 219-233 (AVSEKRNSSEKKSVL) are enriched in basic and acidic residues. A phosphoserine mark is found at Ser-347, Ser-356, and Ser-394. Polar residues predominate over residues 355–373 (SSPTQRTYSSSLKRSSPRT). Arg-424 is modified (omega-N-methylarginine). Residues 481-517 (RTQESGDQDPQEAQKASSATERTQWGQKSDSSLDAEV) form a disordered region. Ser-485 is subject to Phosphoserine. The segment covering 494–517 (QKASSATERTQWGQKSDSSLDAEV) has biased composition (polar residues).

It localises to the secreted. The protein localises to the extracellular space. Its subcellular location is the extracellular matrix. It is found in the basement membrane. Functionally, anchoring filament protein which is a component of the basement membrane zone. In Homo sapiens (Human), this protein is Ladinin-1 (LAD1).